The primary structure comprises 472 residues: Eukaryotic translation initiation factor 2 subunit 3, X-linked (472 aa).

Position 2 is an N-acetylalanine (Ala2). Phosphoserine is present on Ser16. A tr-type G domain is found at Gln39 to Arg248. The segment at Gly48–Ser55 is G1. Ala51–Thr56 provides a ligand contact to GTP. Positions Asn76–Lys80 are G2. The tract at residues Asp134–Gly137 is G3. GTP contacts are provided by residues Asn190–Asp193 and Ser225–Gln227. Positions Asn190 to Asp193 are G4. A G5 region spans residues Ser225–Gln227. Positions Gly457–Val469 are interacts with Cdc123.

It belongs to the TRAFAC class translation factor GTPase superfamily. Classic translation factor GTPase family. EIF2G subfamily. As to quaternary structure, eukaryotic translation initiation factor 2 eIF2 is a heterotrimeric complex composed of an alpha (EIF2S1), a beta (EIF2S2) and a gamma (EIF2S3) chain. eIF2 is member of the 43S pre-initiation complex (43S PIC). Interacts (via C-terminus) with CDC123; the interaction is direct. Widely expressed.

The protein localises to the cytoplasm. Its subcellular location is the cytosol. It catalyses the reaction GTP + H2O = GDP + phosphate + H(+). Its function is as follows. Member of the eIF2 complex that functions in the early steps of protein synthesis by forming a ternary complex with GTP and initiator tRNA. This complex binds to a 40S ribosomal subunit, followed by mRNA binding to form the 43S pre-initiation complex (43S PIC). Junction of the 60S ribosomal subunit to form the 80S initiation complex is preceded by hydrolysis of the GTP bound to eIF2 and release of an eIF2-GDP binary complex. In order for eIF2 to recycle and catalyze another round of initiation, the GDP bound to eIF2 must exchange with GTP by way of a reaction catalyzed by eIF-2B. Along with its paralog on chromosome Y, may contribute to spermatogenesis up to the round spermatid stage. The chain is Eukaryotic translation initiation factor 2 subunit 3, X-linked (Eif2s3) from Rattus norvegicus (Rat).